Here is a 347-residue protein sequence, read N- to C-terminus: Fructose-1,6-bisphosphatase class 1 (347 aa).

Mg(2+) contacts are provided by Glu-106, Asp-128, Ile-130, and Asp-131. Residues 131-134, Asn-223, Tyr-251, and Lys-281 contribute to the substrate site; that span reads DGSS. Position 287 (Glu-287) interacts with Mg(2+).

It belongs to the FBPase class 1 family. Homotetramer. It depends on Mg(2+) as a cofactor.

The protein resides in the cytoplasm. It carries out the reaction beta-D-fructose 1,6-bisphosphate + H2O = beta-D-fructose 6-phosphate + phosphate. Its pathway is carbohydrate biosynthesis; Calvin cycle. The polypeptide is Fructose-1,6-bisphosphatase class 1 (Synechocystis sp. (strain ATCC 27184 / PCC 6803 / Kazusa)).